The primary structure comprises 155 residues: IFN signaling evasion protein OPG029 (155 aa).

The protein belongs to the orthopoxvirus OPG029 family. Interacts with host TANK, TBKBP1 and AZI2; these interactions prevent interferon production. Interacts with host STAT2.

Functionally, prevents establishment of cellular antiviral state by blocking virus-induced phosphorylation and activation of interferon regulatory factors 3/IRF3 and 7/IRF7, transcription factors critical for the induction of interferons alpha and beta. This blockage is produced through the inhibition of host TBK1, by binding host TBK1 adapter proteins TBKBP1 and AZI2, thereby producing a strong inhibition of the phosphorylation and activation of IRF3 and IRF7. Also acts as an inhibitor of the cellular response to type I IFN by interacting with host STAT2. Mechanistically, exerts its inhibitory effect after host ISGF3 complex (composed of STAT1, STAT2 and IRF9) binding to the interferon stimulated response element (ISRE). The chain is IFN signaling evasion protein OPG029 (OPG019) from Cynomys gunnisoni (Gunnison's prairie dog).